Here is a 372-residue protein sequence, read N- to C-terminus: Cytochrome b (372 aa).

Transmembrane regions (helical) follow at residues 25 to 45 (FGSMLLTCSALQTITGFFLAI), 69 to 90 (WIMQNLHAIGASMFFICIYIHI), 105 to 125 (WLSGTILLFILMATAFFGYVL), and 170 to 190 (FFALHFILPFTIISLSSIHIM). Heme b is bound by residues His75 and His89. Heme b contacts are provided by His174 and His188. His193 serves as a coordination point for a ubiquinone. Helical transmembrane passes span 218–238 (HKDILVLTIMLTTMFIIMTLT), 280–300 (LGGTVALVLSVAILLTTPFTH), 312–332 (LTQLMFWTLVATFITITWAAT), and 339–358 (FTMIGQMTSLLYFSFFIMNP).

Belongs to the cytochrome b family. In terms of assembly, the cytochrome bc1 complex contains 3 respiratory subunits (MT-CYB, CYC1 and UQCRFS1), 2 core proteins (UQCRC1 and UQCRC2) and probably 6 low-molecular weight proteins. Heme b serves as cofactor.

The protein resides in the mitochondrion inner membrane. Functionally, component of the ubiquinol-cytochrome c reductase complex (complex III or cytochrome b-c1 complex) that is part of the mitochondrial respiratory chain. The b-c1 complex mediates electron transfer from ubiquinol to cytochrome c. Contributes to the generation of a proton gradient across the mitochondrial membrane that is then used for ATP synthesis. The protein is Cytochrome b (MT-CYB) of Lycodon semicarinatus (Ryukyu odd-tooth snake).